The following is a 254-amino-acid chain: Short-chain dehydrogenase srdF (254 aa).

8 residues coordinate NADP(+): isoleucine 18, serine 37, glutamate 67, asparagine 95, tyrosine 167, lysine 171, valine 199, and threonine 201. The active-site Proton donor is tyrosine 167. The active-site Lowers pKa of active site Tyr is the lysine 171.

It belongs to the short-chain dehydrogenases/reductases (SDR) family.

Functionally, short-chain dehydrogenase; part of the gene cluster that mediates the biosynthesis of sordarial, a salicylic aldehyde structurally related to the phytotoxin pyriculol. The most interesting aspect of this pathway is formation of an aromatic product from the highly reducing polyketide synthase srdA. SrdA synthesizes a reduced polyketide chain from one molecule of acetyl-CoA and five molecules of malonyl-CoA. The polyketide chain is then reductively released as an aldehyde. The oxidoreductases srdC, srdD and srdE then oxidize one of the hydroxy groups to facilitate the intramolecular aldol condensation, followed by dehydration to yield a salicylic aldehyde. This aldehyde can undergo facile reduction by endogenous reductases to yield the alcohol 1-hydroxy-2-hydroxymethyl-3-pent-1,3-dienylbenzene. The flavin-dependent srdI counteract against the propensity of the aldehydes to be reduced under physiological conditions and is responsible for reoxidizing 1-hydroxy-2-hydroxymethyl-3-pent-1,3-dienylbenzene back to the salicylic aldehyde. This salicylic aldehyde is then selectively epoxidized by the cupin-domain-containing oxidoreductase srdB to yield the epoxide, which can be hydrolyzed stereoselectively by the hydrolase srdG to give the final product sordarial. The chain is Short-chain dehydrogenase srdF from Neurospora crassa (strain ATCC 24698 / 74-OR23-1A / CBS 708.71 / DSM 1257 / FGSC 987).